The chain runs to 273 residues: 2,3,4,5-tetrahydropyridine-2,6-dicarboxylate N-succinyltransferase (273 aa).

Substrate-binding residues include R104 and D141.

It belongs to the transferase hexapeptide repeat family. In terms of assembly, homotrimer.

The protein resides in the cytoplasm. It carries out the reaction (S)-2,3,4,5-tetrahydrodipicolinate + succinyl-CoA + H2O = (S)-2-succinylamino-6-oxoheptanedioate + CoA. It functions in the pathway amino-acid biosynthesis; L-lysine biosynthesis via DAP pathway; LL-2,6-diaminopimelate from (S)-tetrahydrodipicolinate (succinylase route): step 1/3. This Nitrosospira multiformis (strain ATCC 25196 / NCIMB 11849 / C 71) protein is 2,3,4,5-tetrahydropyridine-2,6-dicarboxylate N-succinyltransferase.